The primary structure comprises 352 residues: Heat-inducible transcription repressor HrcA (352 aa).

It belongs to the HrcA family.

In terms of biological role, negative regulator of class I heat shock genes (grpE-dnaK-dnaJ and groELS operons). Prevents heat-shock induction of these operons. This chain is Heat-inducible transcription repressor HrcA, found in Thermosynechococcus vestitus (strain NIES-2133 / IAM M-273 / BP-1).